A 242-amino-acid polypeptide reads, in one-letter code: Caffeoyl-CoA O-methyltransferase 2 (242 aa).

Lys16 provides a ligand contact to substrate. S-adenosyl-L-methionine-binding positions include Thr58, Glu80, 82 to 83, Ser88, Asp106, and Ala135; that span reads GV. Residue Asp158 coordinates substrate. Asp158 provides a ligand contact to a divalent metal cation. S-adenosyl-L-methionine is bound at residue Asp160. Asp184 and Asn185 together coordinate a divalent metal cation. A substrate-binding site is contributed by Asn189.

Belongs to the class I-like SAM-binding methyltransferase superfamily. Cation-dependent O-methyltransferase family. CCoAMT subfamily. Requires Mg(2+) as cofactor. As to expression, mostly expressed in the bottom and middle parts of the stems.

It carries out the reaction (E)-caffeoyl-CoA + S-adenosyl-L-methionine = (E)-feruloyl-CoA + S-adenosyl-L-homocysteine + H(+). It participates in aromatic compound metabolism; phenylpropanoid biosynthesis. Methylates caffeoyl-CoA to feruloyl-CoA and 5-hydroxyferuloyl-CoA to sinapoyl-CoA. Plays a role in the synthesis of feruloylated polysaccharides. Involved in the reinforcement of the plant cell wall. Also involved in the responding to wounding or pathogen challenge by the increased formation of cell wall-bound ferulic acid polymers. Methylates 5-hydroxyferulolyl-CoA more efficiently than caffeoyl-CoA. The sequence is that of Caffeoyl-CoA O-methyltransferase 2 (CCOAOMT2) from Nicotiana tabacum (Common tobacco).